We begin with the raw amino-acid sequence, 641 residues long: Tetracycline resistance protein TetQ (641 aa).

The tr-type G domain occupies 1 to 244 (MNIINLGILA…AITSFILPPA (244 aa)). Residues 10 to 17 (AHIDAGKT), 74 to 78 (DTPGH), and 128 to 131 (NKID) contribute to the GTP site.

The protein belongs to the TRAFAC class translation factor GTPase superfamily. Classic translation factor GTPase family. TetM/TetO subfamily.

In terms of biological role, abolishes the inhibitory effect of tetracyclin on protein synthesis by a non-covalent modification of the ribosomes. This Bacteroides thetaiotaomicron protein is Tetracycline resistance protein TetQ (tetQ).